The sequence spans 239 residues: IkB-like protein (239 aa).

4 ANK repeats span residues 48 to 77, 87 to 116, 124 to 153, and 158 to 187; these read NKIT…YPGE, DGNS…KNGI, NGVT…NPNR, and KGFT…KPLF. The Nuclear localization signal motif lies at 81–87; sequence HYRRDKD. The short motif at 203–214 is the Nuclear localization signal element; sequence KKKPKIIITGCE. Residues 206–213 carry the PxIxITxC motif; Interaction with host PPP3CA motif; the sequence is PKIIITGC. The short motif at 228 to 231 is the FLCV motif element; the sequence is FLCV.

It belongs to the asfivirus A238L family. In terms of assembly, interacts with host PPIA. Interacts with host PPP3CA/Calcineurin. Interacts with host RELA/p65; interaction of the 32 kDa form with host RELA results in the formation of a stable complex with NF-kappa-B. Interacts with host PPP3R1. Interacts with host EP300; this interaction inhibits the association of host EP300 with host RELA, JUN and NFATC2. In terms of processing, the protein exists in a 28 kDa and a 32 kDa form, probably due to post-translational modifications which are neither phosphorylation, nor sumoylation.

Its subcellular location is the host nucleus. The protein resides in the host cytoplasm. In terms of biological role, ikB-like protein that inhibits the binding of NF-kappa-B to DNA, thereby downregulating pro-inflammatory cytokine production. Forms a heterodimer with the NF-kappa-B subunit RELA/p65 and prevents the activation of the NF-kappa-B transcription factor. Inhibits calcineurin function, which is required for the induction of nuclear factor of activated T cells (NFAT)-dependent immune response genes. Prevents the binding of substrates to calcineurin without affecting the phosphatase activity. Does not contain the serine residues that are phosphorylated by host IkB kinase and thus is not degraded following stimulation of the NFkB pathway. The protein is IkB-like protein (A238L) of Ornithodoros (relapsing fever ticks).